A 266-amino-acid chain; its full sequence is Glucosamine-6-phosphate deaminase (266 aa).

D72 functions as the Proton acceptor; for enolization step in the catalytic mechanism. D141 acts as the For ring-opening step in catalysis. H143 (proton acceptor; for ring-opening step) is an active-site residue. E148 acts as the For ring-opening step in catalysis.

The protein belongs to the glucosamine/galactosamine-6-phosphate isomerase family. NagB subfamily. Homohexamer.

The enzyme catalyses alpha-D-glucosamine 6-phosphate + H2O = beta-D-fructose 6-phosphate + NH4(+). It functions in the pathway amino-sugar metabolism; N-acetylneuraminate degradation; D-fructose 6-phosphate from N-acetylneuraminate: step 5/5. Its activity is regulated as follows. Allosterically activated by N-acetylglucosamine 6-phosphate (GlcNAc6P). In terms of biological role, catalyzes the reversible isomerization-deamination of glucosamine 6-phosphate (GlcN6P) to form fructose 6-phosphate (Fru6P) and ammonium ion. The polypeptide is Glucosamine-6-phosphate deaminase (Yersinia pseudotuberculosis serotype O:1b (strain IP 31758)).